The sequence spans 635 residues: Threonine--tRNA ligase (635 aa).

In terms of domain architecture, TGS spans 1–61 (MVSIRLPDGS…DRDASLAIVT (61 aa)). Positions 242-533 (DHRKLGKQLD…LIEHHAGAMP (292 aa)) are catalytic. Residues Cys333, His384, and His510 each contribute to the Zn(2+) site.

It belongs to the class-II aminoacyl-tRNA synthetase family. Homodimer. It depends on Zn(2+) as a cofactor.

The protein resides in the cytoplasm. It catalyses the reaction tRNA(Thr) + L-threonine + ATP = L-threonyl-tRNA(Thr) + AMP + diphosphate + H(+). In terms of biological role, catalyzes the attachment of threonine to tRNA(Thr) in a two-step reaction: L-threonine is first activated by ATP to form Thr-AMP and then transferred to the acceptor end of tRNA(Thr). Also edits incorrectly charged L-seryl-tRNA(Thr). This Burkholderia pseudomallei (strain 1106a) protein is Threonine--tRNA ligase.